We begin with the raw amino-acid sequence, 98 residues long: MFEQRVNSDVLTVSTVNSQAQVTQKPLRDSVKQALKNYFAQLNGQDVSDLYELVLAEVEQPLLDMVMQYTRGNQTRAALMMGINRGTLRKKLKKYGMN.

A DNA-binding region (H-T-H motif) is located at residues 74–93 (QTRAALMMGINRGTLRKKLK).

Belongs to the transcriptional regulatory Fis family. Homodimer.

Activates ribosomal RNA transcription. Plays a direct role in upstream activation of rRNA promoters. In Pectobacterium atrosepticum (strain SCRI 1043 / ATCC BAA-672) (Erwinia carotovora subsp. atroseptica), this protein is DNA-binding protein Fis.